An 834-amino-acid polypeptide reads, in one-letter code: Protein translocase subunit SecA (834 aa).

Residues Q85, 103 to 107 (GEGKT), and D491 contribute to the ATP site. The disordered stretch occupies residues 790–809 (RETSTNINDGEGGSHEPIKR). Residues C820, C822, C831, and C832 each coordinate Zn(2+).

The protein belongs to the SecA family. Monomer and homodimer. Part of the essential Sec protein translocation apparatus which comprises SecA, SecYEG and auxiliary proteins SecDF. Other proteins may also be involved. It depends on Zn(2+) as a cofactor.

The protein resides in the cell membrane. It localises to the cytoplasm. It catalyses the reaction ATP + H2O + cellular proteinSide 1 = ADP + phosphate + cellular proteinSide 2.. Functionally, part of the Sec protein translocase complex. Interacts with the SecYEG preprotein conducting channel. Has a central role in coupling the hydrolysis of ATP to the transfer of proteins into and across the cell membrane, serving as an ATP-driven molecular motor driving the stepwise translocation of polypeptide chains across the membrane. The chain is Protein translocase subunit SecA from Clostridium novyi (strain NT).